The following is a 169-amino-acid chain: Regulator of sigma D (169 aa).

This sequence belongs to the Rsd/AlgQ family. Interacts with RpoD.

It is found in the cytoplasm. In terms of biological role, binds RpoD and negatively regulates RpoD-mediated transcription activation by preventing the interaction between the primary sigma factor RpoD with the catalytic core of the RNA polymerase and with promoter DNA. May be involved in replacement of the RNA polymerase sigma subunit from RpoD to RpoS during the transition from exponential growth to the stationary phase. In Yersinia pseudotuberculosis serotype O:1b (strain IP 31758), this protein is Regulator of sigma D.